The sequence spans 599 residues: Elongation factor 4 (599 aa).

A tr-type G domain is found at 2 to 184 (KHIRNFSIIA…RLVRDIPPPQ (183 aa)). Residues 14–19 (DHGKST) and 131–134 (NKID) each bind GTP.

The protein belongs to the TRAFAC class translation factor GTPase superfamily. Classic translation factor GTPase family. LepA subfamily.

The protein localises to the cell inner membrane. It catalyses the reaction GTP + H2O = GDP + phosphate + H(+). In terms of biological role, required for accurate and efficient protein synthesis under certain stress conditions. May act as a fidelity factor of the translation reaction, by catalyzing a one-codon backward translocation of tRNAs on improperly translocated ribosomes. Back-translocation proceeds from a post-translocation (POST) complex to a pre-translocation (PRE) complex, thus giving elongation factor G a second chance to translocate the tRNAs correctly. Binds to ribosomes in a GTP-dependent manner. This Yersinia enterocolitica serotype O:8 / biotype 1B (strain NCTC 13174 / 8081) protein is Elongation factor 4.